Consider the following 300-residue polypeptide: GTPase Era (300 aa).

Positions 7–175 (KSGFAVMAGL…KTAVAETLPF (169 aa)) constitute an Era-type G domain. The G1 stretch occupies residues 15-22 (GLPNAGKS). 15 to 22 (GLPNAGKS) serves as a coordination point for GTP. A G2 region spans residues 41 to 45 (QMTRQ). Positions 62–65 (DTPG) are G3. GTP is bound by residues 62–66 (DTPGF) and 124–127 (NKAD). Residues 124 to 127 (NKAD) form a G4 region. The tract at residues 154–156 (ISA) is G5. In terms of domain architecture, KH type-2 spans 198–283 (IREQIFNLYE…RLELEVSVEP (86 aa)).

This sequence belongs to the TRAFAC class TrmE-Era-EngA-EngB-Septin-like GTPase superfamily. Era GTPase family. In terms of assembly, monomer.

It localises to the cytoplasm. Its subcellular location is the cell inner membrane. Functionally, an essential GTPase that binds both GDP and GTP, with rapid nucleotide exchange. Plays a role in 16S rRNA processing and 30S ribosomal subunit biogenesis and possibly also in cell cycle regulation and energy metabolism. The polypeptide is GTPase Era (Elusimicrobium minutum (strain Pei191)).